A 204-amino-acid chain; its full sequence is MKIVSTGIYYALALCAAAALVAWLAGPLFAIPLILVALFCLYFFRDPDREIPAGPVAVSPADGKVVAVKPEGGLSRLSIFLNVFDVHVNRTPIAGTIQKVQYKEGQFLVASREECSTDNEQNIVTVAGDGTTVIFKQIAGLIARRIVFTKRPGDHVALGERIGLIKFGSRMDVLFGPEWEITVRPGQRVSAGSSIIARRLDRKS.

Catalysis depends on Ser169, which acts as the Schiff-base intermediate with substrate; via pyruvic acid. Residue Ser169 is modified to Pyruvic acid (Ser); by autocatalysis.

It belongs to the phosphatidylserine decarboxylase family. PSD-A subfamily. Heterodimer of a large membrane-associated beta subunit and a small pyruvoyl-containing alpha subunit. Pyruvate serves as cofactor. Post-translationally, is synthesized initially as an inactive proenzyme. Formation of the active enzyme involves a self-maturation process in which the active site pyruvoyl group is generated from an internal serine residue via an autocatalytic post-translational modification. Two non-identical subunits are generated from the proenzyme in this reaction, and the pyruvate is formed at the N-terminus of the alpha chain, which is derived from the carboxyl end of the proenzyme. The post-translation cleavage follows an unusual pathway, termed non-hydrolytic serinolysis, in which the side chain hydroxyl group of the serine supplies its oxygen atom to form the C-terminus of the beta chain, while the remainder of the serine residue undergoes an oxidative deamination to produce ammonia and the pyruvoyl prosthetic group on the alpha chain.

It is found in the cell membrane. It carries out the reaction a 1,2-diacyl-sn-glycero-3-phospho-L-serine + H(+) = a 1,2-diacyl-sn-glycero-3-phosphoethanolamine + CO2. Its pathway is phospholipid metabolism; phosphatidylethanolamine biosynthesis; phosphatidylethanolamine from CDP-diacylglycerol: step 2/2. In terms of biological role, catalyzes the formation of phosphatidylethanolamine (PtdEtn) from phosphatidylserine (PtdSer). The polypeptide is Phosphatidylserine decarboxylase proenzyme (Solibacter usitatus (strain Ellin6076)).